We begin with the raw amino-acid sequence, 42 residues long: Photosystem I reaction center subunit IX (42 aa).

A helical transmembrane segment spans residues 7–27; sequence YLSVAPVLATLWFGSLAGLLI.

The protein belongs to the PsaJ family.

Its subcellular location is the plastid. The protein resides in the chloroplast thylakoid membrane. May help in the organization of the PsaE and PsaF subunits. The polypeptide is Photosystem I reaction center subunit IX (Chloranthus spicatus (Chulantree)).